The sequence spans 466 residues: Arginine biosynthesis bifunctional protein ArgJ, mitochondrial (466 aa).

Residues Thr194, Lys223, Thr234, Glu321, Asn461, and Thr466 each coordinate substrate. The active-site Nucleophile is Thr234.

Belongs to the ArgJ family. In terms of assembly, heterodimer of an alpha and a beta chain. Post-translationally, the alpha and beta chains are autoproteolytically processed from a single precursor protein within the mitochondrion.

The protein localises to the mitochondrion matrix. It carries out the reaction N(2)-acetyl-L-ornithine + L-glutamate = N-acetyl-L-glutamate + L-ornithine. It catalyses the reaction L-glutamate + acetyl-CoA = N-acetyl-L-glutamate + CoA + H(+). It participates in amino-acid biosynthesis; L-arginine biosynthesis; L-ornithine and N-acetyl-L-glutamate from L-glutamate and N(2)-acetyl-L-ornithine (cyclic): step 1/1. It functions in the pathway amino-acid biosynthesis; L-arginine biosynthesis; N(2)-acetyl-L-ornithine from L-glutamate: step 1/4. Catalyzes two activities which are involved in the cyclic version of arginine biosynthesis: the synthesis of acetylglutamate from glutamate and acetyl-CoA, and of ornithine by transacetylation between acetylornithine and glutamate. This is Arginine biosynthesis bifunctional protein ArgJ, mitochondrial from Aspergillus flavus (strain ATCC 200026 / FGSC A1120 / IAM 13836 / NRRL 3357 / JCM 12722 / SRRC 167).